Here is a 125-residue protein sequence, read N- to C-terminus: Small ribosomal subunit protein uS12m (125 aa).

This sequence belongs to the universal ribosomal protein uS12 family.

The protein localises to the mitochondrion. Functionally, protein S12 is involved in the translation initiation step. The protein is Small ribosomal subunit protein uS12m (RPS12) of Allium cepa (Onion).